The primary structure comprises 95 residues: Signal recognition particle 19 kDa protein (95 aa).

It belongs to the SRP19 family. As to quaternary structure, part of the signal recognition particle protein translocation system, which is composed of SRP and FtsY. Archaeal SRP consists of a 7S RNA molecule of 300 nucleotides and two protein subunits: SRP54 and SRP19.

It localises to the cytoplasm. Involved in targeting and insertion of nascent membrane proteins into the cytoplasmic membrane. Binds directly to 7S RNA and mediates binding of the 54 kDa subunit of the SRP. The polypeptide is Signal recognition particle 19 kDa protein (Pyrobaculum islandicum (strain DSM 4184 / JCM 9189 / GEO3)).